Reading from the N-terminus, the 758-residue chain is 5-methyltetrahydropteroyltriglutamate--homocysteine methyltransferase (758 aa).

Residues 16-19 (RELK) and lysine 116 each bind 5-methyltetrahydropteroyltri-L-glutamate. L-homocysteine is bound by residues 436–438 (IGS) and glutamate 489. L-methionine-binding positions include 436-438 (IGS) and glutamate 489. Residues 520 to 521 (RC) and tryptophan 566 contribute to the 5-methyltetrahydropteroyltri-L-glutamate site. Aspartate 604 lines the L-homocysteine pocket. Aspartate 604 is an L-methionine binding site. Glutamate 610 is a 5-methyltetrahydropteroyltri-L-glutamate binding site. Zn(2+) is bound by residues histidine 646, cysteine 648, and glutamate 670. The Proton donor role is filled by histidine 699. Cysteine 731 lines the Zn(2+) pocket.

The protein belongs to the vitamin-B12 independent methionine synthase family. Requires Zn(2+) as cofactor.

It carries out the reaction 5-methyltetrahydropteroyltri-L-glutamate + L-homocysteine = tetrahydropteroyltri-L-glutamate + L-methionine. It functions in the pathway amino-acid biosynthesis; L-methionine biosynthesis via de novo pathway; L-methionine from L-homocysteine (MetE route): step 1/1. Its function is as follows. Catalyzes the transfer of a methyl group from 5-methyltetrahydrofolate to homocysteine resulting in methionine formation. This Xylella fastidiosa (strain M23) protein is 5-methyltetrahydropteroyltriglutamate--homocysteine methyltransferase.